The following is a 77-amino-acid chain: MKLIIFTGLVLFAIVSLIEAQAENEKACLPQYQVCTDAPGNCCSDLVCDCYGRYKCGARIGRNCFCLQKGVIYKRED.

Positions 1–20 are cleaved as a signal peptide; it reads MKLIIFTGLVLFAIVSLIEA. Positions 21-26 are excised as a propeptide; the sequence is QAENEK.

Belongs to the neurotoxin 19 (CSTX) family. 08 (U8-Lctx) subfamily. Contains 4 disulfide bonds. As to expression, expressed by the venom gland.

Its subcellular location is the secreted. This chain is U8-lycotoxin-Ls1r, found in Lycosa singoriensis (Wolf spider).